Consider the following 340-residue polypeptide: Armadillo repeat-containing protein 12 (340 aa).

The segment at 1–101 (MGKSIPQYLG…SITRCVYLLE (101 aa)) is interaction with TBC1D15. ARM repeat units follow at residues 100–139 (LEAE…AFSG), 179–218 (LPDY…YLAQ), and 278–318 (SLHE…SLQY).

In terms of assembly, interacts with TBC1D15, TBC1D21, GK2 and IMMT. Interacts with VDAC2 and VDAC3 in a TBC1D21-dependent manner. Interacts (via ARM domains) with RBBP4. As to expression, expressed in testis. Highly expressed in the mid-piece of the elongated and late spermatids. Expressed at higher levels in neuroblastoma tissues and cell lines, than those of normal dorsal ganglia (at protein level). Expressed in breast cancer, colon cancer, hepatocellular carcinoma, lung cancer, pancreas cancer, prostate cancer, renal cancer and gastric cancer, but not in their normal counterparts.

The protein localises to the nucleus. It is found in the mitochondrion outer membrane. In terms of biological role, essential for male fertility and sperm mitochondrial sheath formation. Required for proper mitochondrial elongation and coiling along the flagellum during the formation of the mitochondrial sheath. Facilitates the growth and aggressiveness of neuroblastoma cells. Increases the EZH2 activity and H3K27me3 levels in a RBBP4-dependent manner, and facilitates the enrichment of polycomb repressive complex 2 and H3K27me3 on gene promoters, resulting in transcriptional repression of tumor suppressors affecting the proliferation, invasion, and metastasis of tumor cells. In Homo sapiens (Human), this protein is Armadillo repeat-containing protein 12 (ARMC12).